Reading from the N-terminus, the 492-residue chain is MSLLKMEYNLYAELKKMTCGQPISLFNEDGDFVEVEPGSSFKFLIPKGFYASTSVKTSLVFETLTTTDNKITSINPTNAPKLYPLQRKVVSEVVSNMRKMIELKRPLYITLHLACGFGKTITTCYLMATHGRKTVICVPNKMLIHQWKTQVEAVGLEHKISIDGVSSLLKELKTQSPDVLIVVSRHLTNDAFCKYINKHYDLFILDESHTYNLMNNTAVTRFLAYYPLMMCYFLTATPRPANRIYCNSIINIAKLSDLKKTIYAVDSFFEPYSTDNIRHMVKRLDSPSNKYHIYTEKLLSVDEPRNQLILDTLVEEFKSGTINRILVITKLREHMVLFYKRLLDIFGPEVVFIGDAQNRRTPDMVKSIKDLNRFIFVSTLFYSGTGLDIPSLDSLFICSAVINNMQIEQLLGRVCRETELLDRTVYVFPSTSIKEIKYVIGNFVQRIISLSVDKLGFKQESYRKHQESEPASVPTSSREERVLNRIFNSQNR.

The 157-residue stretch at 100–256 (MIELKRPLYI…NSIINIAKLS (157 aa)) folds into the Helicase ATP-binding domain. 113–120 (LACGFGKT) contributes to the ATP binding site. Positions 206-209 (DESH) match the DESH box motif.

It belongs to the helicase family. Poxviruses subfamily. As to quaternary structure, interacts with G2. Might be part of a transcription complex composed at least of G2, A18, and H5.

It is found in the virion. Its function is as follows. DNA helicase which seems to act as a postreplicative transcription termination factor. Involved in ATP-dependent release of nascent RNA. Forms a stable complex with single-stranded DNA, and to a lesser extent RNA. The protein is Transcript termination protein A18 of Bos taurus (Bovine).